We begin with the raw amino-acid sequence, 426 residues long: Serine--tRNA ligase (426 aa).

233 to 235 serves as a coordination point for L-serine; sequence TAE. 264–266 contacts ATP; sequence RSE. Glu287 is an L-serine binding site. 351–354 contributes to the ATP binding site; it reads EISS. L-serine is bound at residue Ser387.

This sequence belongs to the class-II aminoacyl-tRNA synthetase family. Type-1 seryl-tRNA synthetase subfamily. In terms of assembly, homodimer. The tRNA molecule binds across the dimer.

The protein resides in the cytoplasm. The catalysed reaction is tRNA(Ser) + L-serine + ATP = L-seryl-tRNA(Ser) + AMP + diphosphate + H(+). It catalyses the reaction tRNA(Sec) + L-serine + ATP = L-seryl-tRNA(Sec) + AMP + diphosphate + H(+). The protein operates within aminoacyl-tRNA biosynthesis; selenocysteinyl-tRNA(Sec) biosynthesis; L-seryl-tRNA(Sec) from L-serine and tRNA(Sec): step 1/1. Catalyzes the attachment of serine to tRNA(Ser). Is also able to aminoacylate tRNA(Sec) with serine, to form the misacylated tRNA L-seryl-tRNA(Sec), which will be further converted into selenocysteinyl-tRNA(Sec). This Pseudomonas putida (strain W619) protein is Serine--tRNA ligase.